The sequence spans 452 residues: Probable glycine dehydrogenase (decarboxylating) subunit 1 (452 aa).

It belongs to the GcvP family. N-terminal subunit subfamily. In terms of assembly, the glycine cleavage system is composed of four proteins: P, T, L and H. In this organism, the P 'protein' is a heterodimer of two subunits.

The catalysed reaction is N(6)-[(R)-lipoyl]-L-lysyl-[glycine-cleavage complex H protein] + glycine + H(+) = N(6)-[(R)-S(8)-aminomethyldihydrolipoyl]-L-lysyl-[glycine-cleavage complex H protein] + CO2. In terms of biological role, the glycine cleavage system catalyzes the degradation of glycine. The P protein binds the alpha-amino group of glycine through its pyridoxal phosphate cofactor; CO(2) is released and the remaining methylamine moiety is then transferred to the lipoamide cofactor of the H protein. The protein is Probable glycine dehydrogenase (decarboxylating) subunit 1 of Nitrosospira multiformis (strain ATCC 25196 / NCIMB 11849 / C 71).